Reading from the N-terminus, the 910-residue chain is DNA mismatch repair protein MutS (910 aa).

The span at 1-15 shows a compositional bias: polar residues; that stretch reads MPRSAAQSEEQTLQG. Positions 1–94 are disordered; the sequence is MPRSAAQSEE…EPAWAHHSQV (94 aa). Residues 44–54 show a composition bias toward low complexity; the sequence is DASLSADAAAR. ATP is bound at residue 726 to 733; the sequence is GPNASGKS.

This sequence belongs to the DNA mismatch repair MutS family.

Functionally, this protein is involved in the repair of mismatches in DNA. It is possible that it carries out the mismatch recognition step. This protein has a weak ATPase activity. This chain is DNA mismatch repair protein MutS, found in Synechococcus sp. (strain WH7803).